The primary structure comprises 489 residues: Cobyric acid synthase (489 aa).

A GATase cobBQ-type domain is found at 252–441 (ALTIGVIQLP…IHGIFANTEF (190 aa)). Cysteine 330 functions as the Nucleophile in the catalytic mechanism. Residue histidine 433 is part of the active site.

It belongs to the CobB/CobQ family. CobQ subfamily.

It participates in cofactor biosynthesis; adenosylcobalamin biosynthesis. Catalyzes amidations at positions B, D, E, and G on adenosylcobyrinic A,C-diamide. NH(2) groups are provided by glutamine, and one molecule of ATP is hydrogenolyzed for each amidation. The polypeptide is Cobyric acid synthase (Herpetosiphon aurantiacus (strain ATCC 23779 / DSM 785 / 114-95)).